The sequence spans 423 residues: Glucoside xylosyltransferase 2 (423 aa).

Over 1–6 (MRFRWK) the chain is Cytoplasmic. The chain crosses the membrane as a helical; Signal-anchor for type II membrane protein span at residues 7-26 (FFGSLLCVTGLLLVLYRQLG). The Lumenal segment spans residues 27–423 (NVPQPPPGPA…RVVVHIRSDV (397 aa)). Positions 60 to 85 (RRDARQGGKKKTNWNNVRAPEQKPNP) are disordered. 2 N-linked (GlcNAc...) asparagine glycosylation sites follow: Asn215 and Asn256.

Belongs to the glycosyltransferase 8 family.

Its subcellular location is the membrane. The catalysed reaction is 3-O-(beta-D-glucosyl)-L-seryl-[EGF-like domain protein] + UDP-alpha-D-xylose = 3-O-[alpha-D-xylosyl-(1-&gt;3)-beta-D-glucosyl]-L-seryl-[EGF-like domain protein] + UDP + H(+). Its function is as follows. Glycosyltransferase which elongates the O-linked glucose attached to EGF-like repeats in the extracellular domain of Notch proteins by catalyzing the addition of xylose. The chain is Glucoside xylosyltransferase 2 (gxylt2) from Xenopus laevis (African clawed frog).